Here is a 122-residue protein sequence, read N- to C-terminus: UPF0102 protein Dred_2035 (122 aa).

It belongs to the UPF0102 family.

This chain is UPF0102 protein Dred_2035, found in Desulforamulus reducens (strain ATCC BAA-1160 / DSM 100696 / MI-1) (Desulfotomaculum reducens).